Reading from the N-terminus, the 427-residue chain is MAQIIDVQAREILDSRGNPTVEVEVLLDDASFGRAGVPSGASTGVHEAHELRDGGDRYLGKGVRQAVENVNEKIAPAVTGLEADDQRLVDKVMLDLDGSDNKSNLGANAILGVSLATAKAAASSANLELFRYLGGPNAHVLPVPMMNIVNGGAHADSGVDVQEFMIAPIGADSFREALRMGAEVYHNLKSVIKSKGLSTGLGDEGGFAPSVDSTKEALDLIAEAVKKAGYKLGEDIAFALDAASSEFYDKDKGVYNFEGGEHSAEDMVKVYEELVENYPIVSIEDPLQEDDWEGYTKLTAEIGDKVQIVGDDFFVTNPARLKEGIEKKAANALLVKVNQIGSLSETADAVQLAQNNNYRCMMSHRSGETEDTTIADLSVAYSCGQIKSGAPARSERVAKYNQLLRIEEFLGDAAVYAGRSAFPRFNG.

Residue Q162 coordinates (2R)-2-phosphoglycerate. The Proton donor role is filled by E204. Mg(2+)-binding residues include D241, E284, and D311. Positions 336, 365, 366, and 387 each coordinate (2R)-2-phosphoglycerate. Catalysis depends on K336, which acts as the Proton acceptor.

This sequence belongs to the enolase family. It depends on Mg(2+) as a cofactor.

The protein localises to the cytoplasm. It is found in the secreted. Its subcellular location is the cell surface. The catalysed reaction is (2R)-2-phosphoglycerate = phosphoenolpyruvate + H2O. The protein operates within carbohydrate degradation; glycolysis; pyruvate from D-glyceraldehyde 3-phosphate: step 4/5. Its function is as follows. Catalyzes the reversible conversion of 2-phosphoglycerate (2-PG) into phosphoenolpyruvate (PEP). It is essential for the degradation of carbohydrates via glycolysis. The polypeptide is Enolase (Corynebacterium kroppenstedtii (strain DSM 44385 / JCM 11950 / CIP 105744 / CCUG 35717)).